A 436-amino-acid chain; its full sequence is Septin-7 (436 aa).

Serine 2 is subject to N-acetylserine. Tyrosine 29 carries the post-translational modification Phosphotyrosine. The Septin-type G domain maps to 46-315; that stretch reads RGFEFTLMVV…ENYRSRKLAA (270 aa). An interaction with SEPTIN12 region spans residues 46-316; that stretch reads RGFEFTLMVV…NYRSRKLAAV (271 aa). The interval 56 to 63 is G1 motif; that stretch reads GESGLGKS. 56–63 is a GTP binding site; that stretch reads GESGLGKS. Residue serine 76 is modified to Phosphoserine. Residues threonine 89, glycine 115, and 194–202 each bind GTP; that span reads KADTLTPEE. The tract at residues 112-115 is G3 motif; sequence DTPG. Positions 193 to 196 are G4 motif; it reads AKAD. Position 227 is a phosphothreonine (threonine 227). GTP-binding residues include glycine 249 and arginine 264. A coiled-coil region spans residues 331 to 436; it reads TKSPLAQMEE…EKNKKKGKIF (106 aa). Residue serine 333 is modified to Phosphoserine. Lysine 372 bears the N6-acetyllysine mark. Positions 377–409 are enriched in basic and acidic residues; that stretch reads ELQRRHEQMKKNLEAQHKELEEKRRQFEEEKAN. Positions 377–436 are disordered; sequence ELQRRHEQMKKNLEAQHKELEEKRRQFEEEKANWEAQQRILEQQNSSRTLEKNKKKGKIF. Serine 423 is subject to Phosphoserine. Threonine 425 carries the post-translational modification Phosphothreonine.

Belongs to the TRAFAC class TrmE-Era-EngA-EngB-Septin-like GTPase superfamily. Septin GTPase family. As to quaternary structure, septins polymerize into heterooligomeric protein complexes that form filaments, and associate with cellular membranes, actin filaments and microtubules. GTPase activity is required for filament formation. Filaments are assembled from asymmetrical heterotrimers, composed of SEPTIN2, SEPTIN6 and SEPTIN7 that associate head-to-head to form a hexameric unit. Within the trimer, directly interacts with SEPTIN6, while interaction with SEPTIN2 seems indirect. In the absence of SEPTIN6, forms homodimers. Interacts directly with CENPE and links CENPE to septin filaments composed of SEPTIN2, SEPTIN6 and SEPTIN7. Interacts with SEPTIN8, SEPTIN9 and SEPTIN11. Component of a septin core octameric complex consisting of SEPTIN12, SEPTIN7, SEPTIN6 and SEPTIN2 or SEPTIN4 in the order 12-7-6-2-2-6-7-12 or 12-7-6-4-4-6-7-12 and located in the sperm annulus; the SEPTIN12:SEPTIN7 association is mediated by the respective GTP-binding domains. Interacts with SEPTIN2 and SEPTIN5. Expressed in the cerebral cortex (at protein level).

It is found in the cytoplasm. The protein resides in the chromosome. Its subcellular location is the centromere. The protein localises to the kinetochore. It localises to the cytoskeleton. It is found in the spindle. The protein resides in the cleavage furrow. Its subcellular location is the midbody. The protein localises to the cilium axoneme. It localises to the cell projection. It is found in the cilium. The protein resides in the flagellum. In terms of biological role, filament-forming cytoskeletal GTPase. Required for normal organization of the actin cytoskeleton. Required for normal progress through mitosis. Involved in cytokinesis. Required for normal association of CENPE with the kinetochore. Plays a role in ciliogenesis and collective cell movements. Forms a filamentous structure with SEPTIN12, SEPTIN6, SEPTIN2 and probably SEPTIN4 at the sperm annulus which is required for the structural integrity and motility of the sperm tail during postmeiotic differentiation. This chain is Septin-7, found in Mus musculus (Mouse).